Here is a 516-residue protein sequence, read N- to C-terminus: RNA-binding region-containing protein 3 (516 aa).

Disordered regions lie at residues 1 to 27 (MAAP…RGDR), 106 to 130 (VHSP…DDKE), 210 to 254 (EDYM…DEDR), and 264 to 283 (ANLQ…RKKR). S21 is modified (phosphoserine). The 76-residue stretch at 27 to 102 (RTLLVRHLPA…HTLVVEFAKE (76 aa)) folds into the RRM 1 domain. Position 108 is a phosphoserine (S108). Residues 115-130 (TEKKKRSDDPVEDDKE) show a composition bias toward basic and acidic residues. The segment covering 217–230 (APLPPTSPQPPEEP) has biased composition (pro residues). Residues 269–283 (KRPKPIKQRHVRKKR) show a composition bias toward basic residues. Positions 419-502 (CRIYVKNLAK…KPMVVQFARS (84 aa)) constitute an RRM 2 domain.

As to quaternary structure, component of the U11/U12 snRNPs that are part of the U12-type spliceosome. Found in a complex with m(7)G-capped U12 snRNA. Interacts with PDCD7.

Its subcellular location is the nucleus. Its function is as follows. Participates in pre-mRNA U12-dependent splicing, performed by the minor spliceosome which removes U12-type introns. U12-type introns comprises less than 1% of all non-coding sequences. Binds to the 3'-stem-loop of m(7)G-capped U12 snRNA. The chain is RNA-binding region-containing protein 3 (RNPC3) from Bos taurus (Bovine).